The sequence spans 353 residues: MRVVERAVIACYLGITIFSGIAFGYEGAFSSGSFEQNPSGVAIHNRVLFKVDEDTVVTTLDVIRKLNILFYSTCPQLVDSVSARSQYYSAMWPVVLETVINEFLMAADAKAKKIFIDPTSVNQEIEAMFGRDLSPFAKFFDMTPEDVFNVVHRILVAQRVEGMMVRSRVMLKVTPGMVREYYQKLADEAAQITQWTYRVLTIKAGLEFLAHKIAGKVQERLNEGSSWDKERLTALVLSQGGQLMCSEEFFREDAQLSVAHRQSLEEINFPEERCGKVLEHASGLKLFVLFNRATKTLDPLDKMEAQLKQQLMMEFAAEEEANYKNKLHARYGFDPATITKLLAEDAPQLFSLL.

Residues 1-24 (MRVVERAVIACYLGITIFSGIAFG) form the signal peptide.

This sequence belongs to the chlamydial CPn_1058/CT_355/TC_0634 family.

This is an uncharacterized protein from Chlamydia trachomatis serovar D (strain ATCC VR-885 / DSM 19411 / UW-3/Cx).